The following is a 397-amino-acid chain: G2/mitotic-specific cyclin-B1 (397 aa).

A compositionally biased stretch (polar residues) spans 1–17 (MALRVTRNTRLASSENQ). The interval 1–30 (MALRVTRNTRLASSENQGALPGKAAVANKP) is disordered.

The protein belongs to the cyclin family. Cyclin AB subfamily. As to quaternary structure, interacts with the CDK1 protein kinase to form a serine/threonine kinase holoenzyme complex also known as maturation promoting factor (MPF). The cyclin subunit imparts substrate specificity to the complex.

Essential for the control of the cell cycle at the G2/M (mitosis) transition. This is G2/mitotic-specific cyclin-B1 (ccnb1) from Carassius auratus (Goldfish).